The primary structure comprises 469 residues: Keratin, type I cytoskeletal 16 (469 aa).

A disordered region spans residues 1–20; sequence MATCSRQFTSSSSMKGSCGI. The interval 1 to 112 is head; that stretch reads MATCSRQFTS…GIGDGLLVGS (112 aa). Positions 113 to 148 are coil 1A; the sequence is EKVTMQNLNDRLATYLDKVRALEEANRDLEVKIRDW. The IF rod domain maps to 113 to 424; that stretch reads EKVTMQNLND…RLLDGENIHS (312 aa). The linker 1 stretch occupies residues 149 to 166; that stretch reads YQRQRPTEIKDYSPYFKT. The interval 167–258 is coil 1B; sequence IEDLKSKIII…KNHEEEMLAL (92 aa). The tract at residues 259–281 is linker 12; sequence RGQTGGDVNVEMDAAPGVDLSRI. Residues 282–420 are coil 2; the sequence is LNEMRDQYEQ…ATYRRLLDGE (139 aa). Residues 421–469 form a tail region; that stretch reads NIHSSSQHSSGQSYSSREVFSSSSRQPRSILKEQGSTSFSQSQSQSSRD. Residues 422–469 form a disordered region; sequence IHSSSQHSSGQSYSSREVFSSSSRQPRSILKEQGSTSFSQSQSQSSRD. 2 stretches are compositionally biased toward low complexity: residues 423–444 and 454–469; these read HSSS…SSSS and QGST…SSRD.

It belongs to the intermediate filament family. In terms of assembly, heterodimer of a type I and a type II keratin. KRT16 associates with KRT6 isomers (KRT6A or KRT6B). Interacts with TCHP. Interacts with TRADD. In terms of tissue distribution, expressed in the epithelia of the tongue, upper and lower palate, footpad, proximal nail fold and nail bed, penile spine, sweat gland ducts, and back epidermis (at protein level). Expressed in upper suprabasal layers of the corneal epithelium (at protein level). Expressed in internal stratified epithelia in the esophagus and vagina (at protein level). Expressed in transitional stratified squamous epithelia in the forestomach, anal canal, and nasal cavity (at protein level). Expressed in transitional epithelia of the ureter, bladder and urethra (at protein level). In mature hair follicles, expressed in the companion layer of the outer root sheath during anagen and in the club hair sheath during catagen and telogen (at protein level).

Epidermis-specific type I keratin that plays a key role in skin. Acts as a regulator of innate immunity in response to skin barrier breach: required for some inflammatory checkpoint for the skin barrier maintenance. This Mus musculus (Mouse) protein is Keratin, type I cytoskeletal 16 (Krt16).